The primary structure comprises 271 residues: tRNA (guanine-N(7)-)-methyltransferase (271 aa).

Glu-95, Glu-120, Asp-147, and Asp-175 together coordinate S-adenosyl-L-methionine. Asp-175 is an active-site residue. Residues Lys-179, Asp-211, and Thr-249 to Glu-252 each bind substrate.

It belongs to the class I-like SAM-binding methyltransferase superfamily. TrmB family.

The catalysed reaction is guanosine(46) in tRNA + S-adenosyl-L-methionine = N(7)-methylguanosine(46) in tRNA + S-adenosyl-L-homocysteine. Its pathway is tRNA modification; N(7)-methylguanine-tRNA biosynthesis. In terms of biological role, catalyzes the formation of N(7)-methylguanine at position 46 (m7G46) in tRNA. The protein is tRNA (guanine-N(7)-)-methyltransferase of Rhodopirellula baltica (strain DSM 10527 / NCIMB 13988 / SH1).